The chain runs to 346 residues: Phosphoribosylformylglycinamidine cyclo-ligase (346 aa).

This sequence belongs to the AIR synthase family.

The protein localises to the cytoplasm. The catalysed reaction is 2-formamido-N(1)-(5-O-phospho-beta-D-ribosyl)acetamidine + ATP = 5-amino-1-(5-phospho-beta-D-ribosyl)imidazole + ADP + phosphate + H(+). Its pathway is purine metabolism; IMP biosynthesis via de novo pathway; 5-amino-1-(5-phospho-D-ribosyl)imidazole from N(2)-formyl-N(1)-(5-phospho-D-ribosyl)glycinamide: step 2/2. In Bacillus cereus (strain ZK / E33L), this protein is Phosphoribosylformylglycinamidine cyclo-ligase.